We begin with the raw amino-acid sequence, 191 residues long: MKTLLRPAVSLFVLLTAVTGVVYPLAVTGIAKVTFPEAADGSLIVKDGKTVGSSLIGQNFSDPKYFWGRPSATSPMPYNASSSSGSNQGPLNPALVDAVKVRIEALKAADPDNKLPIPADLVNASASGLDPHISPEAAAYQVTRVAGQRHLLPADVKALVSQHTEGRQWGVFGEPRVNVLQLNIALDSVSK.

The chain crosses the membrane as a helical span at residues 11–31 (LFVLLTAVTGVVYPLAVTGIA).

This sequence belongs to the KdpC family. In terms of assembly, the system is composed of three essential subunits: KdpA, KdpB and KdpC.

The protein resides in the cell inner membrane. In terms of biological role, part of the high-affinity ATP-driven potassium transport (or Kdp) system, which catalyzes the hydrolysis of ATP coupled with the electrogenic transport of potassium into the cytoplasm. This subunit acts as a catalytic chaperone that increases the ATP-binding affinity of the ATP-hydrolyzing subunit KdpB by the formation of a transient KdpB/KdpC/ATP ternary complex. This Dechloromonas aromatica (strain RCB) protein is Potassium-transporting ATPase KdpC subunit.